The following is a 122-amino-acid chain: Large ribosomal subunit protein uL14c (122 aa).

The protein belongs to the universal ribosomal protein uL14 family. Part of the 50S ribosomal subunit.

It is found in the plastid. In terms of biological role, binds to 23S rRNA. The protein is Large ribosomal subunit protein uL14c of Cuscuta gronovii (Common dodder).